The sequence spans 433 residues: Signal recognition particle 54 kDa protein (433 aa).

GTP contacts are provided by residues 106–113, 186–190, and 244–247; these read GVEGSGKT, DTAGR, and TKMD.

This sequence belongs to the GTP-binding SRP family. SRP54 subfamily. In terms of assembly, part of the signal recognition particle protein translocation system, which is composed of SRP and FtsY. Archaeal SRP consists of a 7S RNA molecule of 300 nucleotides and two protein subunits: SRP54 and SRP19.

The protein localises to the cytoplasm. The enzyme catalyses GTP + H2O = GDP + phosphate + H(+). Functionally, involved in targeting and insertion of nascent membrane proteins into the cytoplasmic membrane. Binds to the hydrophobic signal sequence of the ribosome-nascent chain (RNC) as it emerges from the ribosomes. The SRP-RNC complex is then targeted to the cytoplasmic membrane where it interacts with the SRP receptor FtsY. The polypeptide is Signal recognition particle 54 kDa protein (Pyrobaculum aerophilum (strain ATCC 51768 / DSM 7523 / JCM 9630 / CIP 104966 / NBRC 100827 / IM2)).